The chain runs to 264 residues: NAD kinase (264 aa).

Asp-45 serves as the catalytic Proton acceptor. NAD(+)-binding positions include 45 to 46 (DG), 121 to 122 (NE), Arg-147, Asp-149, Ala-184, and Gln-221.

This sequence belongs to the NAD kinase family. A divalent metal cation serves as cofactor.

Its subcellular location is the cytoplasm. The enzyme catalyses NAD(+) + ATP = ADP + NADP(+) + H(+). In terms of biological role, involved in the regulation of the intracellular balance of NAD and NADP, and is a key enzyme in the biosynthesis of NADP. Catalyzes specifically the phosphorylation on 2'-hydroxyl of the adenosine moiety of NAD to yield NADP. The sequence is that of NAD kinase from Leuconostoc mesenteroides subsp. mesenteroides (strain ATCC 8293 / DSM 20343 / BCRC 11652 / CCM 1803 / JCM 6124 / NCDO 523 / NBRC 100496 / NCIMB 8023 / NCTC 12954 / NRRL B-1118 / 37Y).